Here is a 321-residue protein sequence, read N- to C-terminus: uncharacterized protein (321 aa).

Positions 1–58 constitute an HTH lysR-type domain; that stretch reads MTPAQLRAYSAVVRLGSVRAAAAELGLSDAGVSMHVAALRKELDDPLFTRTGAGLAFT. The H-T-H motif DNA-binding region spans 18–37; it reads VRAAAAELGLSDAGVSMHVA.

It belongs to the LysR transcriptional regulatory family.

This is an uncharacterized protein from Mycobacterium tuberculosis (strain CDC 1551 / Oshkosh).